The primary structure comprises 320 residues: Acetyl-coenzyme A carboxylase carboxyl transferase subunit alpha (320 aa).

The region spanning 33–294 (AFDTEIQALR…GDAVEDELKA (262 aa)) is the CoA carboxyltransferase C-terminal domain.

The protein belongs to the AccA family. In terms of assembly, acetyl-CoA carboxylase is a heterohexamer composed of biotin carboxyl carrier protein (AccB), biotin carboxylase (AccC) and two subunits each of ACCase subunit alpha (AccA) and ACCase subunit beta (AccD).

It localises to the cytoplasm. The catalysed reaction is N(6)-carboxybiotinyl-L-lysyl-[protein] + acetyl-CoA = N(6)-biotinyl-L-lysyl-[protein] + malonyl-CoA. It participates in lipid metabolism; malonyl-CoA biosynthesis; malonyl-CoA from acetyl-CoA: step 1/1. In terms of biological role, component of the acetyl coenzyme A carboxylase (ACC) complex. First, biotin carboxylase catalyzes the carboxylation of biotin on its carrier protein (BCCP) and then the CO(2) group is transferred by the carboxyltransferase to acetyl-CoA to form malonyl-CoA. The polypeptide is Acetyl-coenzyme A carboxylase carboxyl transferase subunit alpha (Caulobacter vibrioides (strain ATCC 19089 / CIP 103742 / CB 15) (Caulobacter crescentus)).